A 453-amino-acid chain; its full sequence is tRNA(Ile)-lysidine synthase (453 aa).

27-32 (SGGSDS) is a binding site for ATP.

Belongs to the tRNA(Ile)-lysidine synthase family.

It is found in the cytoplasm. The catalysed reaction is cytidine(34) in tRNA(Ile2) + L-lysine + ATP = lysidine(34) in tRNA(Ile2) + AMP + diphosphate + H(+). Functionally, ligates lysine onto the cytidine present at position 34 of the AUA codon-specific tRNA(Ile) that contains the anticodon CAU, in an ATP-dependent manner. Cytidine is converted to lysidine, thus changing the amino acid specificity of the tRNA from methionine to isoleucine. In Rhizobium meliloti (strain 1021) (Ensifer meliloti), this protein is tRNA(Ile)-lysidine synthase.